Reading from the N-terminus, the 311-residue chain is Catechol 1,2-dioxygenase (311 aa).

Tyr164 contributes to the catechol binding site. Fe cation is bound by residues Tyr164, Tyr200, His224, and His226. Residue 224–226 (HIH) participates in catechol binding.

It belongs to the intradiol ring-cleavage dioxygenase family. As to quaternary structure, homodimer. It depends on Fe(3+) as a cofactor.

It carries out the reaction catechol + O2 = cis,cis-muconate + 2 H(+). It participates in aromatic compound metabolism; beta-ketoadipate pathway; 5-oxo-4,5-dihydro-2-furylacetate from catechol: step 1/3. This chain is Catechol 1,2-dioxygenase, found in Acinetobacter baylyi (strain ATCC 33305 / BD413 / ADP1).